We begin with the raw amino-acid sequence, 120 residues long: Large ribosomal subunit protein uL18 (120 aa).

This sequence belongs to the universal ribosomal protein uL18 family. Part of the 50S ribosomal subunit; part of the 5S rRNA/L5/L18/L25 subcomplex. Contacts the 5S and 23S rRNAs.

Functionally, this is one of the proteins that bind and probably mediate the attachment of the 5S RNA into the large ribosomal subunit, where it forms part of the central protuberance. This is Large ribosomal subunit protein uL18 from Chloroflexus aggregans (strain MD-66 / DSM 9485).